The following is a 115-amino-acid chain: Gonadotropin subunit beta-2 (115 aa).

Intrachain disulfides connect cysteine 6–cysteine 54, cysteine 20–cysteine 69, cysteine 23–cysteine 107, cysteine 31–cysteine 85, cysteine 35–cysteine 87, and cysteine 90–cysteine 97. N-linked (GlcNAc...) asparagine glycosylation is present at asparagine 10.

This sequence belongs to the glycoprotein hormones subunit beta family. In terms of assembly, heterodimer of an alpha and a beta chain.

Its subcellular location is the secreted. Involved in gametogenesis and steroidogenesis. The protein is Gonadotropin subunit beta-2 (cgbb) of Thunnus obesus (Bigeye tuna).